The sequence spans 1101 residues: Furin-like protease 1, isoform 1-CRR (1101 aa).

The interval 1–57 (MKNDVVRWSRQPTSNTTNSSSSSRSDSNSTHKHRSKSNKLNARQLGSNAARSCQQRS) is disordered. The span at 13–28 (TSNTTNSSSSSRSDSN) shows a compositional bias: low complexity. N-linked (GlcNAc...) asparagine glycosylation is found at asparagine 15, asparagine 18, and asparagine 28. The span at 38–57 (NKLNARQLGSNAARSCQQRS) shows a compositional bias: polar residues. A glycan (N-linked (GlcNAc...) asparagine) is linked at asparagine 108. The chain crosses the membrane as a helical span at residues 119–139 (VFLLALQFSAVVFLCNINVGF). Positions 150–163 (SAGGSSPAAPSSAP) are enriched in low complexity. The tract at residues 150–187 (SAGGSSPAAPSSAPSSPPTVAVPPPPPPSSALKVDPNG) is disordered. A compositionally biased stretch (pro residues) spans 164–178 (SSPPTVAVPPPPPPS). The N-linked (GlcNAc...) asparagine glycan is linked to asparagine 333. Positions 340–654 (MWYLNRGGGL…YGLMDAAEMV (315 aa)) constitute a Peptidase S8 domain. Active-site charge relay system residues include aspartate 372 and histidine 413. N-linked (GlcNAc...) asparagine glycosylation occurs at asparagine 426. Cystine bridges form between cysteine 430/cysteine 579 and cysteine 522/cysteine 552. The Charge relay system role is filled by serine 587. Asparagine 606 carries an N-linked (GlcNAc...) asparagine glycan. In terms of domain architecture, P/Homo B spans 662 to 791 (AVPEQQRCEI…DMIFYGTETP (130 aa)). The cysteines at positions 669 and 695 are disulfide-linked. N-linked (GlcNAc...) asparagine glycans are attached at residues asparagine 727 and asparagine 859. The segment at 886-915 (EEDEQDDEVTRGPVNPYSSSPMDHSLLMSN) is disordered. Over residues 901 to 915 (PYSSSPMDHSLLMSN) the composition is skewed to polar residues. Residue asparagine 978 is glycosylated (N-linked (GlcNAc...) asparagine). Residues 1014–1034 (TVLLLVSVIFTLMGVAVAGGI) form a helical membrane-spanning segment.

Belongs to the peptidase S8 family. Furin subfamily. The cofactor is Ca(2+). In terms of tissue distribution, in adults, isoform 1-CRR is expressed in CNS, fat body, and female reproductive tissues, and in embryos, in anal pads, hindgut, developing antennomaxillary complex, oenocytes, clipeolabrum, pharynx, trachea, CNS and developing posterior spiracles.

The protein localises to the golgi apparatus membrane. It carries out the reaction Release of mature proteins from their proproteins by cleavage of -Arg-Xaa-Yaa-Arg-|-Zaa- bonds, where Xaa can be any amino acid and Yaa is Arg or Lys. Releases albumin, complement component C3 and von Willebrand factor from their respective precursors.. Furin is likely to represent the ubiquitous endoprotease activity within constitutive secretory pathways and capable of cleavage at the RX(K/R)R consensus motif. This chain is Furin-like protease 1, isoform 1-CRR (Fur1), found in Drosophila melanogaster (Fruit fly).